A 545-amino-acid polypeptide reads, in one-letter code: Chaperonin GroEL (545 aa).

ATP-binding positions include 30–33 (TLGP), Lys51, 87–91 (DGTTT), Gly415, and Asp495.

It belongs to the chaperonin (HSP60) family. In terms of assembly, forms a cylinder of 14 subunits composed of two heptameric rings stacked back-to-back. Interacts with the co-chaperonin GroES.

It localises to the cytoplasm. It catalyses the reaction ATP + H2O + a folded polypeptide = ADP + phosphate + an unfolded polypeptide.. Its function is as follows. Together with its co-chaperonin GroES, plays an essential role in assisting protein folding. The GroEL-GroES system forms a nano-cage that allows encapsulation of the non-native substrate proteins and provides a physical environment optimized to promote and accelerate protein folding. The polypeptide is Chaperonin GroEL (Shewanella sp. (strain MR-7)).